The primary structure comprises 294 residues: Protease HtpX homolog 2 (294 aa).

2 helical membrane-spanning segments follow: residues methionine 15–tyrosine 35 and glycine 37–tyrosine 57. A Zn(2+)-binding site is contributed by histidine 140. Residue glutamate 141 is part of the active site. Position 144 (histidine 144) interacts with Zn(2+). 2 helical membrane-spanning segments follow: residues alanine 151–leucine 171 and glycine 185–isoleucine 205. Glutamate 213 is a binding site for Zn(2+).

The protein belongs to the peptidase M48B family. Zn(2+) is required as a cofactor.

It localises to the cell membrane. The chain is Protease HtpX homolog 2 from Methanosarcina acetivorans (strain ATCC 35395 / DSM 2834 / JCM 12185 / C2A).